The sequence spans 92 residues: Cell division topological specificity factor (92 aa).

This sequence belongs to the MinE family.

Prevents the cell division inhibition by proteins MinC and MinD at internal division sites while permitting inhibition at polar sites. This ensures cell division at the proper site by restricting the formation of a division septum at the midpoint of the long axis of the cell. The polypeptide is Cell division topological specificity factor (Gluconobacter oxydans (strain 621H) (Gluconobacter suboxydans)).